A 726-amino-acid polypeptide reads, in one-letter code: MDDVSKCPFSGGVKGFKNKDWWPNQLDLSVLHQHSNLSDPLGEAFDYAKEFKSLDLDALVKDLHALMTDSQEWWPADFGHYGPLFIRMAWHAAGTYRIGDGRGGAGTGQQRFAPLNSWPDNANLDKARRLLWPIKQKYGQKISWADLFVLTGNVALESMGFKTFGFGGGRADTWEPEQDIYWGPEGKWLADERYSGDRELAGSLAAVQMGLIYVNPEGPNGNPDPLAAARDIRETFARMAMNDEETVALIAGGHTFGKTHGAGDASLVGAEPEGADIAQQGLGWASKYGSGKGGDAITSGLEVIWTTTPTKWSNNFFWNLFGYEWELTKSPAGAHQWKPKHGAGANTVPDAHDPSKRHAPSMLTTDLALRFDPAYEKISRRFLENPDQFADAFARAWFKLTHRDMGPKVRYLGPLVPKEDLVWQDPVPALDHPVVDDKDVATLKSKILASGLSVGQLISTAWASASTFRGSDKRGGANGARIRLAPQKDWAVNNPAELAKVLSTLEGIQKEFNASATGGKKISIADLIVLAGNAGVEAAAKKAGVDVAVPFAPGRTDASQEQTDVESFAVLEPTHDGFRNYLSGKQWLSGEELLVDKAQLLTLTAPEMTVLVGGLRVLGANANGSKHGVFTAQTETLSNDFFVNLLDMGVAWTPVDKGEHTFEGRDRKSGAVKWTATRADLIFGSHSQLRALAEVYASSDAKQKFVKDFVAAWTKVMNLDRFDLKA.

The tryptophyl-tyrosyl-methioninium (Trp-Tyr) (with M-239) cross-link spans 90–213; it reads WHAAGTYRIG…LAAVQMGLIY (124 aa). His91 acts as the Proton acceptor in catalysis. The tryptophyl-tyrosyl-methioninium (Tyr-Met) (with W-90) cross-link spans 213–239; it reads YVNPEGPNGNPDPLAAARDIRETFARM. A heme b-binding site is contributed by His254. Residues 334-359 are disordered; sequence AHQWKPKHGAGANTVPDAHDPSKRHA.

Belongs to the peroxidase family. Peroxidase/catalase subfamily. In terms of assembly, homodimer or homotetramer. The cofactor is heme b. In terms of processing, formation of the three residue Trp-Tyr-Met cross-link is important for the catalase, but not the peroxidase activity of the enzyme.

It catalyses the reaction H2O2 + AH2 = A + 2 H2O. The catalysed reaction is 2 H2O2 = O2 + 2 H2O. Bifunctional enzyme with both catalase and broad-spectrum peroxidase activity. The protein is Catalase-peroxidase of Bradyrhizobium sp. (strain BTAi1 / ATCC BAA-1182).